The primary structure comprises 338 residues: Protein REG2 (338 aa).

The disordered stretch occupies residues 1–21 (MTLSNCDSLDNLFQDPPEEEE).

Functionally, regulatory subunit, binds to type-1 protein phosphatase. Functions with HEX2/REG1 and SNF1 protein kinase to regulate growth. Might regulate SNF1 directly or indirectly. In Saccharomyces cerevisiae (strain ATCC 204508 / S288c) (Baker's yeast), this protein is Protein REG2 (REG2).